The sequence spans 145 residues: uncharacterized protein (145 aa).

Residues 71-95 are disordered; sequence GARGRGRTYTKGGSSRSPASWAEQG.

This is an uncharacterized protein from Homo sapiens (Human).